A 104-amino-acid chain; its full sequence is Circadian clock oscillator protein KaiB (104 aa).

This sequence belongs to the KaiB family. The KaiABC complex composition changes during the circadian cycle to control KaiC phosphorylation. Complexes KaiC(6), KaiA(2-4):KaiC(6), KaiB(6):KaiC(6) and KaiC(6):KaiB(6):KaiA(12) are among the most important forms, many form cooperatively. Undergoes a major conformational rearrangment; in the free state forms homotetramers as a dimer of dimers. When bound to the CI domain of KaiC switches to a monomeric thioredoxin-fold (KaiB(fs)). KaiB(fs) binds CikA, leading it to dephosphorylate phospho-RpaA.

Functionally, key component of the KaiABC oscillator complex, which constitutes the main circadian regulator in cyanobacteria. Complex composition changes during the circadian cycle to control KaiC phosphorylation. KaiA stimulates KaiC autophosphorylation, while KaiB sequesters KaiA, leading to KaiC autodephosphorylation. Phospho-Ser-431 KaiC accumulation triggers binding of KaiB to form the KaiB(6):KaiC(6) complex, leading to changes in output regulators CikA and SasA. KaiB switches to a thioredoxin-like fold (KaiB(fs)) when bound to KaiC. KaiB(6):KaiC(6) formation exposes a site for KaiA binding that sequesters KaiA from KaiC, making the KaiC(6):KaiB(6):KaiA(12) complex that results in KaiC autodephosphorylation. Its function is as follows. A metamorphic protein which reversibly switches between an inactive tetrameric fold and a rare, thioredoxin-like monomeric fold (KaiB(fs)). KaiB(fs) binds phospho-KaiC, KaiA and CikA. KaiA and CikA compete for binding to KaiB(fs), and KaiB(fs) and SasA compete for binding to KaiC, thus the clock oscillator and output signal pathway are tightly coupled. The sequence is that of Circadian clock oscillator protein KaiB from Acaryochloris marina (strain MBIC 11017).